Reading from the N-terminus, the 397-residue chain is Phosphoglycerate kinase (397 aa).

Substrate is bound by residues 25–27 (DLN), R41, 64–67 (HLGR), R118, and R151. Residues K202, E324, and 350–353 (GGDT) each bind ATP.

It belongs to the phosphoglycerate kinase family. As to quaternary structure, monomer.

The protein localises to the cytoplasm. It carries out the reaction (2R)-3-phosphoglycerate + ATP = (2R)-3-phospho-glyceroyl phosphate + ADP. The protein operates within carbohydrate degradation; glycolysis; pyruvate from D-glyceraldehyde 3-phosphate: step 2/5. The polypeptide is Phosphoglycerate kinase (Albidiferax ferrireducens (strain ATCC BAA-621 / DSM 15236 / T118) (Rhodoferax ferrireducens)).